The primary structure comprises 228 residues: UPF0758 protein H16_A3033 (228 aa).

The MPN domain occupies 102 to 224; the sequence is GFDGPAAVRN…IRSLADCCDR (123 aa). The Zn(2+) site is built by His-173, His-175, and Asp-186. The JAMM motif signature appears at 173–186; that stretch reads HNHPRGTTAPSQSD.

The protein belongs to the UPF0758 family.

The chain is UPF0758 protein H16_A3033 from Cupriavidus necator (strain ATCC 17699 / DSM 428 / KCTC 22496 / NCIMB 10442 / H16 / Stanier 337) (Ralstonia eutropha).